The following is a 325-amino-acid chain: tRNA(Ile)-lysidine synthase (325 aa).

Position 35–40 (35–40) interacts with ATP; sequence SGGQDS.

Belongs to the tRNA(Ile)-lysidine synthase family.

Its subcellular location is the cytoplasm. The catalysed reaction is cytidine(34) in tRNA(Ile2) + L-lysine + ATP = lysidine(34) in tRNA(Ile2) + AMP + diphosphate + H(+). In terms of biological role, ligates lysine onto the cytidine present at position 34 of the AUA codon-specific tRNA(Ile) that contains the anticodon CAU, in an ATP-dependent manner. Cytidine is converted to lysidine, thus changing the amino acid specificity of the tRNA from methionine to isoleucine. The chain is tRNA(Ile)-lysidine synthase from Gloeobacter violaceus (strain ATCC 29082 / PCC 7421).